The following is a 1358-amino-acid chain: DNA-directed RNA polymerase subunit beta (1358 aa).

The protein belongs to the RNA polymerase beta chain family. As to quaternary structure, the RNAP catalytic core consists of 2 alpha, 1 beta, 1 beta' and 1 omega subunit. When a sigma factor is associated with the core the holoenzyme is formed, which can initiate transcription.

It carries out the reaction RNA(n) + a ribonucleoside 5'-triphosphate = RNA(n+1) + diphosphate. In terms of biological role, DNA-dependent RNA polymerase catalyzes the transcription of DNA into RNA using the four ribonucleoside triphosphates as substrates. This Francisella tularensis subsp. holarctica (strain FTNF002-00 / FTA) protein is DNA-directed RNA polymerase subunit beta.